The following is a 231-amino-acid chain: 26S proteasome non-ATPase regulatory subunit 10 (231 aa).

ANK repeat units follow at residues 3-36 (GCVS…ATRT), 37-69 (DQDS…VNDK), 70-102 (DDAG…VNAV), 103-135 (NQNG…PDAK), 136-168 (DHYD…TNIQ), 169-201 (DTEG…IYIE), and 202-226 (NKEE…LAES).

Part of transient complex containing PSMD10, PSMC4, PSMC5 and PAAF1 formed during the assembly of the 26S proteasome. Stays associated throughout the assembly of the PA700/19S RC and is released upon association with the 20S core. Interacts with PSMC4. Interacts with RB1. Interacts with CDK4. Interacts with MDM2. Interacts with RELA. Associates with a CDK4:CCND2 serine/threonine kinase complex. Interacts with ARHGDIA and increases the interaction between ARHGDIA and RHOA, hence promotes ARHGDIA inactivation of RHOA and ROCK.

It is found in the cytoplasm. It localises to the nucleus. Its function is as follows. Acts as a chaperone during the assembly of the 26S proteasome, specifically of the PA700/19S regulatory complex (RC). In the initial step of the base subcomplex assembly is part of an intermediate PSMD10:PSMC4:PSMC5:PAAF1 module which probably assembles with a PSMD5:PSMC2:PSMC1:PSMD2 module. Independently of the proteasome, regulates EGF-induced AKT activation through inhibition of the RHOA/ROCK/PTEN pathway, leading to prolonged AKT activation. Plays an important role in RAS-induced tumorigenesis. Acts as an oncoprotein by being involved in negative regulation of tumor suppressors RB1 and p53/TP53. Overexpression is leading to phosphorylation of RB1 and proteasomal degradation of RB1. Regulates CDK4-mediated phosphorylation of RB1 by competing with CDKN2A for binding with CDK4. Facilitates binding of MDM2 to p53/TP53 and the mono- and polyubiquitination of p53/TP53 by MDM2 suggesting a function in targeting the TP53:MDM2 complex to the 26S proteasome. Involved in p53-independent apoptosis. Involved in regulation of NF-kappa-B by retaining it in the cytoplasm. Binds to the NF-kappa-B component RELA and accelerates its XPO1/CRM1-mediated nuclear export. The chain is 26S proteasome non-ATPase regulatory subunit 10 (Psmd10) from Mus musculus (Mouse).